A 113-amino-acid polypeptide reads, in one-letter code: UPF0251 protein TK0562 (113 aa).

It belongs to the UPF0251 family.

The sequence is that of UPF0251 protein TK0562 from Thermococcus kodakarensis (strain ATCC BAA-918 / JCM 12380 / KOD1) (Pyrococcus kodakaraensis (strain KOD1)).